Here is a 144-residue protein sequence, read N- to C-terminus: Large ribosomal subunit protein uL15 (144 aa).

The tract at residues 1–54 is disordered; sequence MRLNTLSPAEGSKKAGKRLGRGIGSGLGKTGGRGHKGQKSRSGGGVRRGFEGGQ. Gly residues predominate over residues 21-31; it reads RGIGSGLGKTG.

It belongs to the universal ribosomal protein uL15 family. As to quaternary structure, part of the 50S ribosomal subunit.

In terms of biological role, binds to the 23S rRNA. This chain is Large ribosomal subunit protein uL15, found in Escherichia coli (strain K12 / MC4100 / BW2952).